Here is a 366-residue protein sequence, read N- to C-terminus: NADP-dependent oxidoreductase domain-containing protein 1 (366 aa).

This sequence belongs to the pyrroline-5-carboxylate reductase family.

Functionally, probable oxidoreductase. This chain is NADP-dependent oxidoreductase domain-containing protein 1 (Noxred1), found in Mus musculus (Mouse).